A 325-amino-acid chain; its full sequence is Hydroxymethylglutaryl-CoA lyase, mitochondrial (325 aa).

A mitochondrion-targeting transit peptide spans 1 to 27 (MAAMRKAVPRRLVGLASLRAVSTSSMG). One can recognise a Pyruvate carboxyltransferase domain in the interval 33-300 (VKIVEVGPRD…HTGVNLQKLL (268 aa)). Arginine 41 lines the substrate pocket. An a divalent metal cation-binding site is contributed by aspartate 42. Position 48 is an N6-acetyllysine; alternate (lysine 48). Lysine 48 is modified (N6-succinyllysine; alternate). Lysine 111 carries the N6-acetyllysine modification. N6-acetyllysine; alternate occurs at positions 137 and 179. N6-succinyllysine; alternate is present on residues lysine 137 and lysine 179. A divalent metal cation contacts are provided by histidine 233 and histidine 235. Cysteine 266 is a catalytic residue. Asparagine 275 contributes to the a divalent metal cation binding site. Residues 323 to 325 (CKL) carry the Microbody targeting signal motif. An N6-acetyllysine modification is found at lysine 324.

It belongs to the HMG-CoA lyase family. As to quaternary structure, homodimer; disulfide-linked. Can also form homotetramers.

Its subcellular location is the mitochondrion matrix. The protein localises to the peroxisome. The catalysed reaction is (3S)-3-hydroxy-3-methylglutaryl-CoA = acetoacetate + acetyl-CoA. It functions in the pathway metabolic intermediate metabolism; (S)-3-hydroxy-3-methylglutaryl-CoA degradation; acetoacetate from (S)-3-hydroxy-3-methylglutaryl-CoA: step 1/1. Mitochondrial 3-hydroxy-3-methylglutaryl-CoA lyase that catalyzes a cation-dependent cleavage of (S)-3-hydroxy-3-methylglutaryl-CoA into acetyl-CoA and acetoacetate, a key step in ketogenesis. Terminal step in leucine catabolism. Ketone bodies (beta-hydroxybutyrate, acetoacetate and acetone) are essential as an alternative source of energy to glucose, as lipid precursors and as regulators of metabolism. The sequence is that of Hydroxymethylglutaryl-CoA lyase, mitochondrial (HMGCL) from Pongo abelii (Sumatran orangutan).